A 618-amino-acid polypeptide reads, in one-letter code: Sodium/iodide cotransporter (618 aa).

Residues 1-14 (MEGAEAGARATFGP) are Extracellular-facing. The chain crosses the membrane as a helical span at residues 15 to 31 (WDYGVFATMLLVSTGIG). The Cytoplasmic portion of the chain corresponds to 32 to 56 (LWVGLARGGQRSADDFFTGGRQLAA). Residues 57–80 (VPVGLSLAASFMSAVQVLGVPAEA) traverse the membrane as a discontinuously helical segment. Positions 69, 71, and 72 each coordinate Na(+). Val76 lines the iodide pocket. Over 81-84 (ARYG) the chain is Extracellular. A helical transmembrane segment spans residues 85-105 (LKFLWMCVGQLLNSLLTALLF). An iodide-binding site is contributed by Met90. Residues 106–130 (LPIFYRLGLTSTYQYLELRFSRAVR) lie on the Cytoplasmic side of the membrane. The chain crosses the membrane as a helical span at residues 131–157 (LCGTLQYLVATMLYTGIVIYAPALILN). A Na(+)-binding site is contributed by Tyr144. The Extracellular portion of the chain corresponds to 158–163 (QVTGLD). The chain crosses the membrane as a helical span at residues 164 to 181 (IWASLLSTGIICTLYTTV). The Cytoplasmic segment spans residues 182-189 (GGMKAVVW). The helical transmembrane segment at 190–208 (TDVFQVVVMLVGFWVILAR) threads the bilayer. The Extracellular portion of the chain corresponds to 209–243 (GVMLMGGPWNVLSLAQNHSRINLMDFDPDPRSRYT). The chain crosses the membrane as a discontinuously helical span at residues 244–266 (FWTFVVGGSLVWLSMYGVNQAQV). Trp255 contributes to the iodide binding site. Met258 is a binding site for Na(+). Residues 267-278 (QRYVACHTERKA) are Cytoplasmic-facing. A helical membrane pass occupies residues 279 to 301 (KLALLVNQLGLFLIVASAACCGI). Residues 302–335 (VMFVYYKDCDPLLTGRIAAPDQYMPLLVLDIFED) lie on the Extracellular side of the membrane. Residues 336-363 (LPGVPGLFLACAYSGTLSTASTSINAMA) traverse the membrane as a helical segment. The Cytoplasmic segment spans residues 364 to 386 (AVTVEDLIKPRMPSLAPRKLVFI). A helical membrane pass occupies residues 387–408 (SKGLSFIYGSTCLTVAALSSLL). Residues 409–411 (GGG) are Extracellular-facing. A helical transmembrane segment spans residues 412–437 (VLQGSFTVMGVISGPLLGAFTLGMLL). Leu413 serves as a coordination point for iodide. Ser416 and Phe417 together coordinate Na(+). Phe417 lines the iodide pocket. The Cytoplasmic segment spans residues 438–441 (PACN). A helical membrane pass occupies residues 442–465 (TPGVLSGLTAGLAVSLWVAVGATL). The Extracellular portion of the chain corresponds to 466–520 (YPPGEQTMGVLPTSAAGCTNASVLPSPPGAANTSRGIPSSGMDSGRPAFADTFYA). N-linked (GlcNAc...) asparagine glycans are attached at residues Asn485 and Asn497. Residues 521–545 (VSYLYYGALGTLTTMLCGALISYLT) traverse the membrane as a helical segment. Residues 546-618 (GPTKRSSLGP…YLGHDVETNL (73 aa)) are Cytoplasmic-facing. Ser551 is modified (phosphoserine; by PKA). A compositionally biased stretch (basic and acidic residues) spans 571–587 (PKEDTTTLEDSLVKGPE). Residues 571-618 (PKEDTTTLEDSLVKGPEDIPAATKKPPGFRPEAETHPLYLGHDVETNL) are disordered.

The protein belongs to the sodium:solute symporter (SSF) (TC 2.A.21) family. As to quaternary structure, monomer. Post-translationally, glycosylated.

The protein localises to the cell membrane. It is found in the cytoplasm. The enzyme catalyses iodide(out) + 2 Na(+)(out) = iodide(in) + 2 Na(+)(in). It carries out the reaction chlorate(out) + 2 Na(+)(out) = chlorate(in) + 2 Na(+)(in). The catalysed reaction is thiocyanate(out) + 2 Na(+)(out) = thiocyanate(in) + 2 Na(+)(in). It catalyses the reaction nitrate(out) + 2 Na(+)(out) = nitrate(in) + 2 Na(+)(in). The enzyme catalyses selenocyanate(out) + 2 Na(+)(out) = selenocyanate(in) + 2 Na(+)(in). Perchlorate inhibits iodide transport activity. Oxyanions inhibit iodide transport activity by blocking the binding sites for iodide and one of the sodium ions. Functionally, sodium:iodide symporter that mediates the transport of iodide into the thyroid gland. Can also mediate the transport of chlorate, thiocynate, nitrate and selenocynate. This chain is Sodium/iodide cotransporter (Slc5a5), found in Mus musculus (Mouse).